The primary structure comprises 206 residues: Small ribosomal subunit protein uS4 (206 aa).

One can recognise an S4 RNA-binding domain in the interval 96 to 156 (TRLDNVVYRM…EKSRTQARIK (61 aa)).

Belongs to the universal ribosomal protein uS4 family. In terms of assembly, part of the 30S ribosomal subunit. Contacts protein S5. The interaction surface between S4 and S5 is involved in control of translational fidelity.

Its function is as follows. One of the primary rRNA binding proteins, it binds directly to 16S rRNA where it nucleates assembly of the body of the 30S subunit. Functionally, with S5 and S12 plays an important role in translational accuracy. The protein is Small ribosomal subunit protein uS4 of Shewanella putrefaciens (strain CN-32 / ATCC BAA-453).